The sequence spans 272 residues: R3H domain-containing protein 4 (272 aa).

A disordered region spans residues 141–167; that stretch reads LEDEGKSKARRRGPTRGEDRRREDPAY. The span at 155–165 shows a compositional bias: basic and acidic residues; that stretch reads TRGEDRRREDP. The R3H domain occupies 191–254; that stretch reads METLETWEER…KRQMKVSNRH (64 aa).

It is found in the nucleus. This Bos taurus (Bovine) protein is R3H domain-containing protein 4 (R3HDM4).